We begin with the raw amino-acid sequence, 683 residues long: E3 ubiquitin-protein ligase RNF103 (683 aa).

4 helical membrane-spanning segments follow: residues 6-26 (FFLLLYFLVLFVLARFFEAIV), 326-346 (LFVLSLVLVNLMAWMDLFITQ), 366-386 (LLIISWLPVLGFLQLPYLDSF), and 411-431 (MFYTSHPALFLSTYLGHGLLI). Acidic residues predominate over residues 525–542 (EEMSESSQDTENDSDSDN). Residues 525-548 (EEMSESSQDTENDSDSDNMDTFSS) form a disordered region. An RING-type zinc finger spans residues 619–661 (CVVCLENFENGCLLMGLPCGHVFHQNCIVMWLAGGRHCCPVCR).

In terms of assembly, interacts with DERL1 and VCP. As to expression, highly expressed in the normal cerebellum but not in the cerebral cortex.

It localises to the endoplasmic reticulum membrane. The catalysed reaction is S-ubiquitinyl-[E2 ubiquitin-conjugating enzyme]-L-cysteine + [acceptor protein]-L-lysine = [E2 ubiquitin-conjugating enzyme]-L-cysteine + N(6)-ubiquitinyl-[acceptor protein]-L-lysine.. It participates in protein modification; protein ubiquitination. Its function is as follows. Acts as an E2-dependent E3 ubiquitin-protein ligase, probably involved in the ER-associated protein degradation pathway. This is E3 ubiquitin-protein ligase RNF103 (Rnf103) from Mus musculus (Mouse).